The primary structure comprises 262 residues: MSRLSWGYREHNGPIHWKEFFPIADGDQQSPIEIKTKEVKYDSSLRPLSIKYDPSSAKIISNSGHSFNVDFDDTENKSVLRGGPLTGSYRLRQVHLHWGSADDHGSEHIVDGVSYAAELHVVHWNSDKYPSFVEAAHEPDGLAVLGVFLQIGEPNSQLQKITDTLDSIKEKGKQTRFTNFDLLSLLPPSWDYWTYPGSLTVPPLLESVTWIVLKQPINISSQQLAKFRSLLCTAEGEAAAFLVSNHRPPQPLKGRKVRASFH.

The 258-residue stretch at Leu4–Phe261 folds into the Alpha-carbonic anhydrase domain. His65 (proton donor/acceptor) is an active-site residue. Zn(2+)-binding residues include His95, His97, and His120. Position 200 to 201 (Thr200 to Val201) interacts with substrate.

This sequence belongs to the alpha-carbonic anhydrase family. Zn(2+) serves as cofactor. Expressed in thymus, small intestine, spleen, prostate, ovary, colon and testis.

It catalyses the reaction hydrogencarbonate + H(+) = CO2 + H2O. Its activity is regulated as follows. Inhibited by acetazolamide. In terms of biological role, reversible hydration of carbon dioxide. This chain is Carbonic anhydrase 13 (CA13), found in Homo sapiens (Human).